The following is a 508-amino-acid chain: MDEKTKKAEEMALSLARAVTGGDEQAAIKYATWLAEQKVPLRVQVKPEVSPTQDIRLCVSVEDAYMHTVTIWLTVRPDMTVASLKDMVFLDYGFPPSLQQWVVGQRLARDQETLHSHGIRRNGDSAYLYLLSARNTSLNPQELQRQRQLRMLEDLGFKDLTLQPRGPLEPVLPKPRTHQETGQPDAAPESPPVGWQCPGCTFINKPTRPGCEMCCRARPEAYQIPASYQPDEEERARLAGEEEALRQYEQRKQQQQEGNYLQHVQLEQRSLVLNTEPAECPVCYSVLAPGEAVVLRECLHTFCRECLQGTIRNSQEAEVSCPFIDNTYSCPGKLLEREIRALLSPEDYQRFLDLGVSIAENRSTLSYHCKTPDCRGWCFFEDDVNEFTCPVCTRVNCLLCKAIHERMNCREYQDDLAHRARNDVAAQQTTEMLRVMLQQGEAMYCPQCRIVVQKKDGCDWIRCTVCHTEICWVTKGPRWGPGGPGDTSGGCRCRVNGIPCHPSCQNCH.

An N-acetylmethionine modification is found at Met1. The interaction with IRF3 stretch occupies residues 1 to 218 (MDEKTKKAEE…PGCEMCCRAR (218 aa)). An interaction with TAB2 region spans residues 1 to 268 (MDEKTKKAEE…NYLQHVQLEQ (268 aa)). A Phosphoserine modification is found at Ser50. The 65-residue stretch at 55–119 (IRLCVSVEDA…DQETLHSHGI (65 aa)) folds into the Ubiquitin-like domain. Residues 69–131 (VTIWLTVRPD…NGDSAYLYLL (63 aa)) form an interaction with RNF31 region. Residues 161–191 (TLQPRGPLEPVLPKPRTHQETGQPDAAPESP) form a disordered region. The RanBP2-type zinc finger occupies 188-220 (PESPPVGWQCPGCTFINKPTRPGCEMCCRARPE). Residues 231–260 (DEEERARLAGEEEALRQYEQRKQQQQEGNY) adopt a coiled-coil conformation. Residues 276 to 504 (EPAECPVCYS…VNGIPCHPSC (229 aa)) are TRIAD supradomain. Zn(2+)-binding residues include Cys280, Cys283, Cys298, His300, Cys303, Cys306, and Cys321. Residues 280-330 (CPVCYSVLAPGEAVVLRECLHTFCRECLQGTIRNSQEAEVSCPFIDNTYSC) form an RING-type 1 zinc finger. Residue Tyr328 is modified to Phosphotyrosine. Zn(2+) is bound by residues Cys330, Cys369, Cys374, Cys389, Cys392, Cys397, Cys400, His404, Cys409, Cys445, and Cys448. The segment at 349-409 (QRFLDLGVSI…CKAIHERMNC (61 aa)) adopts an IBR-type zinc-finger fold. The RING-type 2; atypical zinc finger occupies 445–474 (CPQCRIVVQKKDGCDWIRCTVCHTEICWVT). The active site involves Cys458. Residues Cys463 and Cys466 each contribute to the Zn(2+) site.

It belongs to the RBR family. As to quaternary structure, component of the LUBAC complex (linear ubiquitin chain assembly complex) which consists of SHARPIN, RBCK1 and RNF31. LUBAC has a MW of approximately 600 kDa suggesting a heteromultimeric assembly of its subunits. Interacts with beta-I-type (PRKCB1) and zeta-type protein kinase C (PRKCZ). Interacts with UBE2L3. Interacts with IREB2 only in iron-rich conditions. Associates with the TNF-R1 signaling complex (TNF-RSC) in a stimulation-dependent manner. Interacts with EYA1, TAB2, TAB3, MAP3K7 TRAF6 and RIPK1. Interacts with IRF3. In terms of processing, auto-ubiquitinated. Auto-ubiquitination leads to degradation by the proteasome. Phosphorylated. In vitro, phosphorylation inhibits auto-ubiquitination activity. In terms of tissue distribution, widely expressed.

It catalyses the reaction [E2 ubiquitin-conjugating enzyme]-S-ubiquitinyl-L-cysteine + [acceptor protein]-L-lysine = [E2 ubiquitin-conjugating enzyme]-L-cysteine + [acceptor protein]-N(6)-ubiquitinyl-L-lysine.. The protein operates within protein modification; protein ubiquitination. Its function is as follows. E3 ubiquitin-protein ligase, which accepts ubiquitin from specific E2 ubiquitin-conjugating enzymes, such as UBE2L3/UBCM4, and then transfers it to substrates. Functions as an E3 ligase for oxidized IREB2 and both heme and oxygen are necessary for IREB2 ubiquitination. Promotes ubiquitination of TAB2 and IRF3 and their degradation by the proteasome. Component of the LUBAC complex which conjugates linear ('Met-1'-linked) polyubiquitin chains to substrates and plays a key role in NF-kappa-B activation and regulation of inflammation. LUBAC conjugates linear polyubiquitin to IKBKG and RIPK1 and is involved in activation of the canonical NF-kappa-B and the JNK signaling pathways. Linear ubiquitination mediated by the LUBAC complex interferes with TNF-induced cell death and thereby prevents inflammation. LUBAC is recruited to the TNF-R1 signaling complex (TNF-RSC) following polyubiquitination of TNF-RSC components by BIRC2 and/or BIRC3 and to conjugate linear polyubiquitin to IKBKG and possibly other components contributing to the stability of the complex. The LUBAC complex is also involved in innate immunity by conjugating linear polyubiquitin chains at the surface of bacteria invading the cytosol to form the ubiquitin coat surrounding bacteria. LUBAC is not able to initiate formation of the bacterial ubiquitin coat, and can only promote formation of linear polyubiquitins on pre-existing ubiquitin. The bacterial ubiquitin coat acts as an 'eat-me' signal for xenophagy and promotes NF-kappa-B activation. Together with OTULIN, the LUBAC complex regulates the canonical Wnt signaling during angiogenesis. Binds polyubiquitin of different linkage types. This is RanBP-type and C3HC4-type zinc finger-containing protein 1 (Rbck1) from Rattus norvegicus (Rat).